We begin with the raw amino-acid sequence, 351 residues long: MKNPNIIQPEDLRISQIIDANLDRAREGLRVLEDWARFGLGNEDFVIRIKNFRQILGKNHLEIYKLSRNHIEDQCKGLSHVEQINRNSSSKIISSNSARVQEALRVIEEFSRIHNSKLSKIASEIRYEIYTLEIEILNFNTRKRAQSIISKNNLYSITDPRENLLEIIEKILLGGVKIIQHRFKEGNDKDHLKEAIEINKLCKKYNSLFIVNNRLDIALASKADGVHLGQDDLDIKTVRKLLGASKIIGVSANNSTDINKAVKDGCDYIGVGPVFPTLTKKNKEPLGEEKIKALTKELNIPCFAIGGINKLNISSLKNHGISKVAIVSGLLNSEDPKDEAMIIIKELSHEN.

The interval 1-128 is unknown; sequence MKNPNIIQPE…SKIASEIRYE (128 aa). The segment at 129 to 351 is thiamine-phosphate synthase; it reads IYTLEIEILN…IIIKELSHEN (223 aa). 4-amino-2-methyl-5-(diphosphooxymethyl)pyrimidine contacts are provided by residues 180–184 and N212; that span reads QHRFK. Mg(2+)-binding residues include N213 and D232. S251 provides a ligand contact to 4-amino-2-methyl-5-(diphosphooxymethyl)pyrimidine. 277-279 serves as a coordination point for 2-[(2R,5Z)-2-carboxy-4-methylthiazol-5(2H)-ylidene]ethyl phosphate; that stretch reads TLT. Residue K280 participates in 4-amino-2-methyl-5-(diphosphooxymethyl)pyrimidine binding. 2-[(2R,5Z)-2-carboxy-4-methylthiazol-5(2H)-ylidene]ethyl phosphate contacts are provided by residues G307 and 327–328; that span reads VS.

Belongs to the thiamine-phosphate synthase family.

The catalysed reaction is 2-[(2R,5Z)-2-carboxy-4-methylthiazol-5(2H)-ylidene]ethyl phosphate + 4-amino-2-methyl-5-(diphosphooxymethyl)pyrimidine + 2 H(+) = thiamine phosphate + CO2 + diphosphate. It catalyses the reaction 2-(2-carboxy-4-methylthiazol-5-yl)ethyl phosphate + 4-amino-2-methyl-5-(diphosphooxymethyl)pyrimidine + 2 H(+) = thiamine phosphate + CO2 + diphosphate. It carries out the reaction 4-methyl-5-(2-phosphooxyethyl)-thiazole + 4-amino-2-methyl-5-(diphosphooxymethyl)pyrimidine + H(+) = thiamine phosphate + diphosphate. It participates in cofactor biosynthesis; thiamine diphosphate biosynthesis; thiamine phosphate from 4-amino-2-methyl-5-diphosphomethylpyrimidine and 4-methyl-5-(2-phosphoethyl)-thiazole: step 1/1. Functionally, condenses 4-methyl-5-(beta-hydroxyethyl)thiazole monophosphate (THZ-P) and 2-methyl-4-amino-5-hydroxymethyl pyrimidine pyrophosphate (HMP-PP) to form thiamine monophosphate (TMP). The chain is Thiamine-phosphate synthase from Prochlorococcus marinus subsp. pastoris (strain CCMP1986 / NIES-2087 / MED4).